We begin with the raw amino-acid sequence, 148 residues long: Homoprotocatechuate degradative operon repressor (148 aa).

In terms of domain architecture, HTH marR-type spans H2 to A134.

In terms of biological role, repressor for the homoprotocatechuate catabolic pathway hpc operon. This Escherichia coli protein is Homoprotocatechuate degradative operon repressor (hpcR).